Here is a 303-residue protein sequence, read N- to C-terminus: Protoheme IX farnesyltransferase (303 aa).

The next 9 helical transmembrane spans lie at 25–45 (MGLVQGNLIPAFAGAWLAVVM), 54–74 (IPQILLMLFGSTLIMGGACAL), 104–124 (LLLLSFGMMLVGEICLFLLNI), 125–145 (PSGVLGLMGIVGYVSYYSIWS), 151–171 (WNTVIGSFPGAVPPLIGWVAI), 179–199 (AIALFLVVFCWQPIHFYALAI), 227–247 (FIWLIILLPVPLLLINLGVVF), 248–268 (VVLATLLNLGWIALGLTTFKK), and 280–300 (FIYSLNYLVIFFVLAVIVSLL).

This sequence belongs to the UbiA prenyltransferase family. Protoheme IX farnesyltransferase subfamily. In terms of assembly, interacts with CtaA.

It is found in the cell membrane. The enzyme catalyses heme b + (2E,6E)-farnesyl diphosphate + H2O = Fe(II)-heme o + diphosphate. Its pathway is porphyrin-containing compound metabolism; heme O biosynthesis; heme O from protoheme: step 1/1. Converts heme B (protoheme IX) to heme O by substitution of the vinyl group on carbon 2 of heme B porphyrin ring with a hydroxyethyl farnesyl side group. The polypeptide is Protoheme IX farnesyltransferase (Staphylococcus aureus (strain Mu3 / ATCC 700698)).